Reading from the N-terminus, the 267-residue chain is Small ribosomal subunit protein uS3 (267 aa).

The region spanning 43-111 is the KH type-2 domain; it reads IRKAMSKDLE…QVQLNIFEVK (69 aa). Residues 216–267 form a disordered region; it reads FEEQQAQQSNNRQGRRGDRRPRRGQRNAAPQQNAAAEAPAAAEAPAATETKE. A compositionally biased stretch (basic residues) spans 228–240; the sequence is QGRRGDRRPRRGQ. Residues 241-267 show a composition bias toward low complexity; sequence RNAAPQQNAAAEAPAAAEAPAATETKE.

This sequence belongs to the universal ribosomal protein uS3 family. Part of the 30S ribosomal subunit. Forms a tight complex with proteins S10 and S14.

Functionally, binds the lower part of the 30S subunit head. Binds mRNA in the 70S ribosome, positioning it for translation. The sequence is that of Small ribosomal subunit protein uS3 from Bifidobacterium adolescentis (strain ATCC 15703 / DSM 20083 / NCTC 11814 / E194a).